Consider the following 869-residue polypeptide: DNA mismatch repair protein MutS (869 aa).

ATP is bound at residue 624 to 631 (GPNMGGKS).

Belongs to the DNA mismatch repair MutS family.

Its function is as follows. This protein is involved in the repair of mismatches in DNA. It is possible that it carries out the mismatch recognition step. This protein has a weak ATPase activity. In Solibacter usitatus (strain Ellin6076), this protein is DNA mismatch repair protein MutS.